The primary structure comprises 513 residues: ATP synthase subunit alpha (513 aa).

169–176 (GDRQTGKT) lines the ATP pocket.

The protein belongs to the ATPase alpha/beta chains family. In terms of assembly, F-type ATPases have 2 components, CF(1) - the catalytic core - and CF(0) - the membrane proton channel. CF(1) has five subunits: alpha(3), beta(3), gamma(1), delta(1), epsilon(1). CF(0) has three main subunits: a(1), b(2) and c(9-12). The alpha and beta chains form an alternating ring which encloses part of the gamma chain. CF(1) is attached to CF(0) by a central stalk formed by the gamma and epsilon chains, while a peripheral stalk is formed by the delta and b chains.

It localises to the cell inner membrane. The catalysed reaction is ATP + H2O + 4 H(+)(in) = ADP + phosphate + 5 H(+)(out). Its function is as follows. Produces ATP from ADP in the presence of a proton gradient across the membrane. The alpha chain is a regulatory subunit. In Histophilus somni (strain 2336) (Haemophilus somnus), this protein is ATP synthase subunit alpha.